A 417-amino-acid chain; its full sequence is Ig-like V-type domain-containing protein FAM187A (417 aa).

Positions 1-18 (MSLAHTTVLLWAWGSLQA) are cleaved as a signal peptide. Residues 19–377 (FEIVEKESVF…ASLSDPETRT (359 aa)) lie on the Extracellular side of the membrane. Residues Asn248 and Asn318 are each glycosylated (N-linked (GlcNAc...) asparagine). The region spanning 268-362 (PWVPQVPIQF…IAGFRLGVIT (95 aa)) is the Ig-like V-type domain. Residues Cys290 and Cys346 are joined by a disulfide bond. A helical transmembrane segment spans residues 378-398 (AIELTLMGYLLITIFFITIHL). The Cytoplasmic segment spans residues 399–417 (CRCCCQSRCCPNFSAQTLL).

Belongs to the FAM187 family.

The protein resides in the membrane. In Mus musculus (Mouse), this protein is Ig-like V-type domain-containing protein FAM187A (Fam187a).